Here is a 744-residue protein sequence, read N- to C-terminus: Putative pre-mRNA-splicing factor ATP-dependent RNA helicase DHX32 (744 aa).

At M1 the chain carries N-acetylmethionine. The disordered stretch occupies residues 1-28; sequence MDEEELDHPNASPEKRYFPESLDSSDGD. Positions 72–270 constitute a Helicase ATP-binding domain; it reads MESLLQNQVV…RLIFEIHRSG (199 aa). 85–92 contributes to the ATP binding site; it reads GDSKCGKS. The DEAH box motif lies at 185-188; sequence DDVH. The Helicase C-terminal domain maps to 258–438; it reads SVIRLIFEIH…SMVLFMKRVD (181 aa).

It belongs to the DEAD box helicase family. DEAH subfamily.

It localises to the nucleus. The protein localises to the mitochondrion. The catalysed reaction is ATP + H2O = ADP + phosphate + H(+). The polypeptide is Putative pre-mRNA-splicing factor ATP-dependent RNA helicase DHX32 (Dhx32) (Mus musculus (Mouse)).